The following is a 380-amino-acid chain: Cytochrome b (380 aa).

A run of 4 helical transmembrane segments spans residues 33–53, 77–98, 113–133, and 178–198; these read FGSL…FLAM, WLIR…YLHV, WNIG…GYVL, and FFAF…LHLL. 2 residues coordinate heme b: His-83 and His-97. Positions 182 and 196 each coordinate heme b. A ubiquinone is bound at residue His-201. 4 helical membrane passes run 226–246, 288–308, 320–340, and 347–367; these read YKDL…ALFS, LGGV…PLLH, LTQI…WIGG, and FITV…IFIP.

This sequence belongs to the cytochrome b family. The cytochrome bc1 complex contains 3 respiratory subunits (MT-CYB, CYC1 and UQCRFS1), 2 core proteins (UQCRC1 and UQCRC2) and probably 6 low-molecular weight proteins. Requires heme b as cofactor.

The protein localises to the mitochondrion inner membrane. Its function is as follows. Component of the ubiquinol-cytochrome c reductase complex (complex III or cytochrome b-c1 complex) that is part of the mitochondrial respiratory chain. The b-c1 complex mediates electron transfer from ubiquinol to cytochrome c. Contributes to the generation of a proton gradient across the mitochondrial membrane that is then used for ATP synthesis. The protein is Cytochrome b (mt-cyb) of Neocyttus rhomboidalis (Spiky oreo dory).